We begin with the raw amino-acid sequence, 549 residues long: Glucose-6-phosphate isomerase (549 aa).

Residue Glu-355 is the Proton donor of the active site. Active-site residues include His-386 and Lys-514.

Belongs to the GPI family.

The protein resides in the cytoplasm. The enzyme catalyses alpha-D-glucose 6-phosphate = beta-D-fructose 6-phosphate. The protein operates within carbohydrate biosynthesis; gluconeogenesis. Its pathway is carbohydrate degradation; glycolysis; D-glyceraldehyde 3-phosphate and glycerone phosphate from D-glucose: step 2/4. Catalyzes the reversible isomerization of glucose-6-phosphate to fructose-6-phosphate. The sequence is that of Glucose-6-phosphate isomerase from Salmonella choleraesuis (strain SC-B67).